Reading from the N-terminus, the 124-residue chain is Ribonuclease pancreatic (124 aa).

A disordered region spans residues 1 to 24 (KETAAAKFQRQHMDSSTSSASSSN). Residues Lys-7 and Arg-10 each coordinate substrate. Catalysis depends on His-12, which acts as the Proton acceptor. Cystine bridges form between Cys-26/Cys-84, Cys-40/Cys-95, Cys-58/Cys-110, and Cys-65/Cys-72. A glycan (N-linked (GlcNAc...) asparagine; in river-breed only) is linked at Asn-34. Substrate-binding positions include 41-45 (KPVNT), Lys-66, and Arg-85. Residue His-119 is the Proton donor of the active site.

The protein belongs to the pancreatic ribonuclease family. Monomer. Interacts with and forms tight 1:1 complexes with RNH1. Dimerization of two such complexes may occur. Interaction with RNH1 inhibits this protein. In terms of processing, swamp breed ribonuclease do not bind carbohydrate, but there is evidence of a polymorphic form that does. As to expression, pancreas.

It is found in the secreted. It carries out the reaction an [RNA] containing cytidine + H2O = an [RNA]-3'-cytidine-3'-phosphate + a 5'-hydroxy-ribonucleotide-3'-[RNA].. It catalyses the reaction an [RNA] containing uridine + H2O = an [RNA]-3'-uridine-3'-phosphate + a 5'-hydroxy-ribonucleotide-3'-[RNA].. Endonuclease that catalyzes the cleavage of RNA on the 3' side of pyrimidine nucleotides. Acts on single-stranded and double-stranded RNA. The sequence is that of Ribonuclease pancreatic (RNASE1) from Bubalus bubalis (Domestic water buffalo).